The chain runs to 425 residues: Ribulose bisphosphate carboxylase/oxygenase activase B, chloroplastic (425 aa).

The transit peptide at 1–43 (MASAFSSTVGAPASTPTIFLGKKVKNYYHGGNKMKSRVVRVMA) directs the protein to the chloroplast. 153-160 (GGKGQGKS) contributes to the ATP binding site.

This sequence belongs to the RuBisCO activase family.

The protein resides in the plastid. The protein localises to the chloroplast stroma. Functionally, activation of RuBisCO (ribulose-1,5-bisphosphate carboxylase/oxygenase; EC 4.1.1.39) involves the ATP-dependent carboxylation of the epsilon-amino group of lysine leading to a carbamate structure. In Hordeum vulgare (Barley), this protein is Ribulose bisphosphate carboxylase/oxygenase activase B, chloroplastic (RCAB).